We begin with the raw amino-acid sequence, 102 residues long: Iron-sulfur cluster assembly protein CyaY (102 aa).

Belongs to the frataxin family.

In terms of biological role, involved in iron-sulfur (Fe-S) cluster assembly. May act as a regulator of Fe-S biogenesis. This is Iron-sulfur cluster assembly protein CyaY from Mannheimia succiniciproducens (strain KCTC 0769BP / MBEL55E).